A 227-amino-acid chain; its full sequence is Cytidylate kinase (227 aa).

ATP is bound at residue 12–20 (GPSGAGKGT).

Belongs to the cytidylate kinase family. Type 1 subfamily.

Its subcellular location is the cytoplasm. It catalyses the reaction CMP + ATP = CDP + ADP. It carries out the reaction dCMP + ATP = dCDP + ADP. This chain is Cytidylate kinase, found in Salmonella paratyphi A (strain ATCC 9150 / SARB42).